A 1406-amino-acid polypeptide reads, in one-letter code: Protein crumbs homolog 1 (1406 aa).

An N-terminal signal peptide occupies residues 1-25 (MALKNINYLLIFYLSFSLLIYIKNS). Over 26 to 1347 (FCNKNNTRCL…DDLISDIFTT (1322 aa)) the chain is Extracellular. Asn30, Asn41, and Asn42 each carry an N-linked (GlcNAc...) asparagine glycan. EGF-like domains lie at 30 to 68 (NNTR…KDCD), 70 to 108 (MKDP…TICE), and 110 to 146 (TIGS…RFCE). Intrachain disulfides connect Cys34/Cys45, Cys39/Cys54, Cys56/Cys67, Cys74/Cys85, Cys79/Cys96, Cys98/Cys107, Cys114/Cys125, Cys119/Cys134, Cys136/Cys145, Cys152/Cys163, Cys157/Cys172, Cys174/Cys183, Cys190/Cys201, Cys195/Cys210, Cys212/Cys221, Cys228/Cys239, Cys233/Cys248, Cys250/Cys259, Cys266/Cys277, and Cys271/Cys286. Positions 148–184 (DHDECASSPCQNGAVCQDGIDGYSCFCVPGYQGRHCD) constitute an EGF-like 4; calcium-binding domain. One can recognise an EGF-like 5; calcium-binding domain in the interval 186 to 222 (EVDECASDPCKNEATCLNEIGRYTCICPHNYSGVNCE). Residue Asn215 is glycosylated (N-linked (GlcNAc...) asparagine). Residues 224 to 260 (EIDECWSQPCLNGATCQDALGAYFCDCAPGFLGDHCE) enclose the EGF-like 6; calcium-binding domain. Residues 262-299 (NTDECASQPCLHGGLCVDGENRYSCNCTGSGFTGTHCE) enclose the EGF-like 7; calcium-binding domain. Asn287 carries an N-linked (GlcNAc...) asparagine glycan. Disulfide bonds link Cys288–Cys298, Cys305–Cys316, Cys310–Cys325, Cys327–Cys336, Cys343–Cys354, Cys348–Cys383, Cys385–Cys394, Cys401–Cys412, Cys406–Cys421, Cys423–Cys438, Cys445–Cys456, Cys450–Cys469, and Cys471–Cys480. 2 EGF-like domains span residues 301–337 (LMPL…AQCE) and 339–395 (DLNE…IHCE). N-linked (GlcNAc...) asparagine glycans are attached at residues Asn313 and Asn322. The EGF-like 10; calcium-binding domain occupies 397-439 (DVNECSSNPCQNGGTCENLPGNYTCHCPFDNLSRTFYGGRDCS). N-linked (GlcNAc...) asparagine glycosylation is found at Asn418, Asn427, and Asn453. Positions 441–481 (ILLGCTHQQCLNNGTCIPHFQDGQHGFSCLCPSGYTGSLCE) constitute an EGF-like 11 domain. The Laminin G-like 1 domain occupies 485–670 (TLSFEGDGFL…GSSLNVKAGC (186 aa)). N-linked (GlcNAc...) asparagine glycosylation is found at Asn550, Asn561, and Asn657. Disulfide bonds link Cys642–Cys670, Cys676–Cys687, Cys681–Cys696, and Cys698–Cys707. The EGF-like 12 domain maps to 672-708 (RKDWCESQPCQSRGRCINLWLSYQCDCHRPYEGPNCL). Positions 714–885 (GRFGQDDSTG…PVLVNVTQGC (172 aa)) constitute a Laminin G-like 2 domain. Asn757, Asn871, and Asn880 each carry an N-linked (GlcNAc...) asparagine glycan. 6 cysteine pairs are disulfide-bonded: Cys851/Cys885, Cys891/Cys902, Cys896/Cys911, Cys913/Cys922, Cys928/Cys939, and Cys933/Cys948. 2 EGF-like domains span residues 887-923 (GDNS…KACE) and 924-960 (EVQW…QSGQ). One can recognise a Laminin G-like 3 domain in the interval 950 to 1137 (ANAVFNGQSG…ISTNSVVTGC (188 aa)). Asn968, Asn975, and Asn1000 each carry an N-linked (GlcNAc...) asparagine glycan. Cystine bridges form between Cys1096/Cys1137, Cys1143/Cys1154, Cys1148/Cys1163, Cys1165/Cys1174, Cys1181/Cys1191, Cys1186/Cys1200, Cys1202/Cys1211, Cys1218/Cys1229, Cys1223/Cys1238, Cys1240/Cys1249, Cys1259/Cys1274, Cys1268/Cys1283, Cys1285/Cys1294, Cys1301/Cys1312, Cys1306/Cys1321, and Cys1323/Cys1332. One can recognise an EGF-like 15 domain in the interval 1139 to 1175 (QLNVCNSNPCLHGGNCEDIYSSYHCSCPLGWSGKHCE). In terms of domain architecture, EGF-like 16; calcium-binding spans 1177–1212 (NIDECFSNPCIHGNCSDRVAAYHCTCEPGYTGVNCE). N-linked (GlcNAc...) asparagine glycosylation occurs at Asn1190. EGF-like domains are found at residues 1214 to 1250 (DIDN…KFCR) and 1255 to 1295 (PSTV…EWCE). Residues Asn1243, Asn1265, and Asn1273 are each glycosylated (N-linked (GlcNAc...) asparagine). One can recognise an EGF-like 19; calcium-binding domain in the interval 1297 to 1333 (DIDECASDPCVNGGLCQDLLNKFQCLCDVAFAGERCE). A helical transmembrane segment spans residues 1348-1368 (IGSVTVALLLILLLAIVASVV). The Cytoplasmic portion of the chain corresponds to 1369–1406 (TSNKRATQGTYSPSRQEKEGSRVEMWNLMPPPAMERLI). Positions 1370–1406 (SNKRATQGTYSPSRQEKEGSRVEMWNLMPPPAMERLI) are interaction with EPB41L5.

This sequence belongs to the Crumbs protein family. As to quaternary structure, component of a complex composed of PALS1, CRB1 and EPB41L5. Within the complex, interacts (via intracellular domain) with PALS1 and EPB41L5 (via FERM domain). Forms a complex with MPP4 and PALS1. Interacts with MPDZ/MUPP1 and MPP4. Post-translationally, extensively glycosylated. In terms of tissue distribution, preferential expression in retina, also expressed in brain, testis, fetal brain and fetal eye. Expressed at the outer limiting membrane and apical to adherens junctions in the retina.

It is found in the apical cell membrane. It localises to the secreted. The protein resides in the cell projection. Its subcellular location is the cilium. The protein localises to the photoreceptor outer segment. It is found in the photoreceptor inner segment. Plays a role in photoreceptor morphogenesis in the retina. May maintain cell polarization and adhesion. This is Protein crumbs homolog 1 from Homo sapiens (Human).